A 135-amino-acid chain; its full sequence is Auxin-responsive protein SAUR66 (135 aa).

It belongs to the ARG7 family.

The protein localises to the cell membrane. Its function is as follows. May promote auxin-stimulated organ elongation, such as hypocotyls, stamen filaments and petals. This chain is Auxin-responsive protein SAUR66, found in Arabidopsis thaliana (Mouse-ear cress).